The chain runs to 318 residues: MKVLFIADPMASFKTYKDTTYAMMREMAKRGWRLFHTLSGELSVKNGLVVADASAFEFLGAQDDHDKNWFAAADKVQTALKAFDAVIMRTDPPFDMQYLYATQLLTLAEQQGAKVFNSGQAMRDFNEKLAILNFSRFTAPTLVTTRSADVRAFLKEHGDIIIKPLDGMGGMGIFRLTEKDPNIGSILETLMQLDSRTIMAQRYIPEIVHGDKRILIIGGEVVPYALARIPQNGETRGNLAAGGRGVAQELSERDREIAETLAPELKRRGILLAGLDVIGSNLTEVNVTSPTGFQEIMKQKGFDVAAMFADAVAEWSVR.

The ATP-grasp domain maps to 128 to 313; that stretch reads KLAILNFSRF…VAAMFADAVA (186 aa). 154 to 210 is an ATP binding site; sequence LKEHGDIIIKPLDGMGGMGIFRLTEKDPNIGSILETLMQLDSRTIMAQRYIPEIVHG. Residues Glu284 and Asn286 each contribute to the Mg(2+) site.

Belongs to the prokaryotic GSH synthase family. It depends on Mg(2+) as a cofactor. Requires Mn(2+) as cofactor.

The catalysed reaction is gamma-L-glutamyl-L-cysteine + glycine + ATP = glutathione + ADP + phosphate + H(+). Its pathway is sulfur metabolism; glutathione biosynthesis; glutathione from L-cysteine and L-glutamate: step 2/2. The polypeptide is Glutathione synthetase (Neisseria meningitidis serogroup A / serotype 4A (strain DSM 15465 / Z2491)).